Consider the following 738-residue polypeptide: MPMTRDFFATAPKGLEPLLVRELDGLGAESIKETRAGVEFRGTLETAYRVCLWSRLANRILMSLDRFAAATPEALYDGVQRTDWGRHFGPGATLAVDFSSRRSAITHTLFGAQKVKDAIADQFLEHCGRRPSVRLERPDIRINVHLDADQAVIGLDLSGDSLHRRGYRTEAGPAPLKENLAAAVLIRAGWPDIAARGGSLIDPMCGSATLLIEGALLAADIAPGSFREYFGFLAWKGHDLELWRKLLTEARERAEAGLARLPPILGYDLDRRAIHLALDNIDRAGLRGRIHVERKVAADVRPKGRPGLVVVNPPYGERLGDVESLIPVYREFGETLQRHFRGWNAALLTGNFELAFQIGIRAGRYHTLYNGALECRLFLFDIAPERFFTPRSGVPETEGQKKLRQIVEKARRGAIPAEQSEMFANRLRKNLRNLGTWARRNGVSCYRLYDADLPEFAVAVDIYQGEKLWVHVQEYEAPASVDPAKAQSRLAGAVAMIPEVLEVPREQIFLKVRRRQKGDAQYVKQGQTAHFHVVEEGGWRFWVNFEDYLDTGLFLDHRITRGLIQQVARDRHFLNLFAYTGTATVYAAGGGAASTTTVDMSHTYLDWAGRNLALNGFGERDHLRIQADCLDWLEQAVDRRRRYGLIFLDPPTFSNSKRMTGSFDIQRDQGPLLKKVVSLLEPGGMLIFSTNRRRFRLDETALAGCAVEDVSRVTLPKDFERNPRIHACWRILAPDRQR.

Positions 46–157 constitute a THUMP domain; it reads TAYRVCLWSR…ADQAVIGLDL (112 aa).

This sequence belongs to the methyltransferase superfamily. RlmKL family.

It localises to the cytoplasm. The catalysed reaction is guanosine(2445) in 23S rRNA + S-adenosyl-L-methionine = N(2)-methylguanosine(2445) in 23S rRNA + S-adenosyl-L-homocysteine + H(+). It catalyses the reaction guanosine(2069) in 23S rRNA + S-adenosyl-L-methionine = N(2)-methylguanosine(2069) in 23S rRNA + S-adenosyl-L-homocysteine + H(+). Functionally, specifically methylates the guanine in position 2445 (m2G2445) and the guanine in position 2069 (m7G2069) of 23S rRNA. The chain is Ribosomal RNA large subunit methyltransferase K/L from Methylococcus capsulatus (strain ATCC 33009 / NCIMB 11132 / Bath).